We begin with the raw amino-acid sequence, 516 residues long: MTTPYKHEPFTNFGIEENRKAFEKALETVNNEWLGQSYPLVIDGERYETENKIVSINPANKEEVVGTVSKATQDHAEKAIQAAAKAFETWRYTDPEERAAVLFRAVAKVRRKKHEFSALLVKEAGKPWNEADADTAEAIDFMEYYARQMIELAKGKPVNSREGERNQYVYTPTGVTVVIPPWNFLFAIMAGTTVAPIVTGNTVVLKPASAAPVIAAKFVEVLEESGLPKGVVNFVPGSGAEVGDYLVDHPKTSIITFTGSREVGTRIFERAAKVQPGQTHLKQVIAEMGGKDTVVVDEDCDIELAAQSIFTSAFGFAGQKCSAGSRAVVHEKVYDEVLKRVIEITESKKVGEPDSADVYMGPVIDQASFNKIMDYIEIGKEEGRLVSGGKGDDSKGYFIEPTIFADLDPKARLMQEEIFGPVVAFSKVSSFDEALEVANNTEYGLTGAVITKNRDHINRAKQEFHVGNLYFNRNCTGAIVGYHPFGGFKMSGTDSKAGGPDYLALHMQAKTISEMF.

Catalysis depends on residues glutamate 287 and cysteine 321.

Belongs to the aldehyde dehydrogenase family. RocA subfamily.

It catalyses the reaction L-glutamate 5-semialdehyde + NAD(+) + H2O = L-glutamate + NADH + 2 H(+). It functions in the pathway amino-acid degradation; L-proline degradation into L-glutamate; L-glutamate from L-proline: step 2/2. The sequence is that of 1-pyrroline-5-carboxylate dehydrogenase from Bacillus licheniformis (strain ATCC 14580 / DSM 13 / JCM 2505 / CCUG 7422 / NBRC 12200 / NCIMB 9375 / NCTC 10341 / NRRL NRS-1264 / Gibson 46).